A 549-amino-acid chain; its full sequence is MSSTVSLLFCCLFLQLCPSAQQYHGEKGISVPDHGFCQPISIPLCTDIAYNQTIMPNLLGHTNQEDAGLEVHQFYPLVKVQCSPELRFFLCSMYAPVCTVLEQAIPPCRSLCERARQGCEALMNKFGFQWPERLRCENFPVHGAGEICVGQNTSDNSPSGPTARPSPYLPDSITFQPHPHRDFTCPRQLKVPPYLAYRFLGEKDCGAPCEPGKANGLMYFKEEEVRFARLWVGIWAILCCISTLFTVLTYLVDMRRFSYPERPIIFLSGCYFMVAVAYTAGFLLEERAVCVERFSEDSYRTVAQGTKKEGCTILFMILYFFGMASSIWWVILSLTWFLSAGMKWGHEAIEANSQYFHLAAWAVPAVKTITILAMGQVDGDVLSGVCYVGINSVDSLRGFVLAPLFVYLFIGTSFLLAGFVSLFRIRTIMKHDGTKTEKLEKLMVRIGVFSVMYTVPATIVLACYFYEQAFRDTWEKTWLVQTCKGYAVPCPNYNFAPMSPDFTVFMIKYLMTMIVGITSSFWIWSGKTLQSWRRFYHRLSNGSKGETAV.

The first 22 residues, 1–22 (MSSTVSLLFCCLFLQLCPSAQQ), serve as a signal peptide directing secretion. The Extracellular portion of the chain corresponds to 23-231 (YHGEKGISVP…EEEVRFARLW (209 aa)). The FZ domain occupies 32–151 (PDHGFCQPIS…HGAGEICVGQ (120 aa)). 5 cysteine pairs are disulfide-bonded: Cys37/Cys98, Cys45/Cys91, Cys82/Cys119, Cys108/Cys148, and Cys112/Cys136. Asn51 is a glycosylation site (N-linked (GlcNAc...) asparagine). A glycan (N-linked (GlcNAc...) asparagine) is linked at Asn152. Residues 232 to 252 (VGIWAILCCISTLFTVLTYLV) form a helical membrane-spanning segment. The Cytoplasmic segment spans residues 253-263 (DMRRFSYPERP). The chain crosses the membrane as a helical span at residues 264–284 (IIFLSGCYFMVAVAYTAGFLL). Topologically, residues 285–311 (EERAVCVERFSEDSYRTVAQGTKKEGC) are extracellular. A helical membrane pass occupies residues 312–332 (TILFMILYFFGMASSIWWVIL). Over 333-354 (SLTWFLSAGMKWGHEAIEANSQ) the chain is Cytoplasmic. A helical transmembrane segment spans residues 355–375 (YFHLAAWAVPAVKTITILAMG). The Extracellular segment spans residues 376-398 (QVDGDVLSGVCYVGINSVDSLRG). The chain crosses the membrane as a helical span at residues 399 to 419 (FVLAPLFVYLFIGTSFLLAGF). Residues 420–445 (VSLFRIRTIMKHDGTKTEKLEKLMVR) are Cytoplasmic-facing. The chain crosses the membrane as a helical span at residues 446-466 (IGVFSVMYTVPATIVLACYFY). At 467 to 503 (EQAFRDTWEKTWLVQTCKGYAVPCPNYNFAPMSPDFT) the chain is on the extracellular side. A helical transmembrane segment spans residues 504–524 (VFMIKYLMTMIVGITSSFWIW). The Cytoplasmic portion of the chain corresponds to 525–549 (SGKTLQSWRRFYHRLSNGSKGETAV). The Lys-Thr-X-X-X-Trp motif, mediates interaction with the PDZ domain of Dvl family members signature appears at 527-532 (KTLQSW). A PDZ-binding motif is present at residues 547–549 (TAV).

The protein belongs to the G-protein coupled receptor Fz/Smo family. Interacts with wnt11 and sdc4. The extracellular domain interacts with the extracellular domain of pcdh8/papc. In terms of tissue distribution, expressed in the animal region of cleavage stage embryos. During gastrulation, broadly expressed on the dorsal side of the embryo in deep mesodermal cells surrounding the blastopore lip and in presumptive anterior neuroectoderm. During neurulation, becomes progressively more restricted to the dorsal epidermis, neural plate, and neural tube. Expressed in the cranial neural crest of neurulae and tailbud embryos as well as the pronephros of tailbud embryos. Localized to the brain of neurulae, tailbud embryos and tadpoles. In tadpoles, strongly expressed in the eye and developing heart.

The protein localises to the cell membrane. It is found in the endosome membrane. Its function is as follows. Receptor for Wnt proteins. Acts in both canonical and non-canonical Wnt pathways. Although different papers report differing Wnt preferences, wnt5a, wnt8b and wnt11 have been proposed as synergists. In the canonical Wnt pathway, acts via beta-catenin to promote the expression of the dorsal genes siamois, twin and nodal3 and to establish the dorsal axis of the embryo and induce dorsal mesoderm formation. In a non-canonical Wnt/planar cell polarity (PCP) pathway, acts with sdc4 and dvl2/dsh to regulate convergent extension cell movements during gastrulation. Triggers phosphorylation of dvl2/dsh and its translocation to the plasma membrane. In a third branch of Wnt signaling, acts in a non-canonical pathway via trimeric G proteins, and independently of dvl2/dsh, to recruit protein kinase C (PKC) to the membrane and thus activate PKC. PKC signaling controls cell sorting and tissue separation during gastrulation. This is Frizzled-7-A (fzd7-a) from Xenopus laevis (African clawed frog).